Reading from the N-terminus, the 637-residue chain is Threonine--tRNA ligase (637 aa).

In terms of domain architecture, TGS spans 1 to 61 (MLNITLPDGS…VEDSAVQIIT (61 aa)). Positions 242–533 (DHRKLGKQLD…LIENHAGSFP (292 aa)) are catalytic. Cys-333, His-384, and His-510 together coordinate Zn(2+).

This sequence belongs to the class-II aminoacyl-tRNA synthetase family. In terms of assembly, homodimer. The cofactor is Zn(2+).

Its subcellular location is the cytoplasm. It catalyses the reaction tRNA(Thr) + L-threonine + ATP = L-threonyl-tRNA(Thr) + AMP + diphosphate + H(+). Its function is as follows. Catalyzes the attachment of threonine to tRNA(Thr) in a two-step reaction: L-threonine is first activated by ATP to form Thr-AMP and then transferred to the acceptor end of tRNA(Thr). Also edits incorrectly charged L-seryl-tRNA(Thr). The polypeptide is Threonine--tRNA ligase (Neisseria meningitidis serogroup B (strain ATCC BAA-335 / MC58)).